The following is a 434-amino-acid chain: Tryptophan--tRNA ligase (434 aa).

ATP contacts are provided by residues 14–16 and 22–23; these read TTS and GN. The 'HIGH' region motif lies at 15–23; that stretch reads TSGTPHLGN. Residue Asp147 coordinates L-tryptophan. ATP contacts are provided by residues 159-161, Leu199, and 206-210; these read GRD and KMSKS. Residues 206–210 carry the 'KMSKS' region motif; that stretch reads KMSKS.

The protein belongs to the class-I aminoacyl-tRNA synthetase family. Homodimer.

It localises to the cytoplasm. The catalysed reaction is tRNA(Trp) + L-tryptophan + ATP = L-tryptophyl-tRNA(Trp) + AMP + diphosphate + H(+). Catalyzes the attachment of tryptophan to tRNA(Trp). The chain is Tryptophan--tRNA ligase from Xylella fastidiosa (strain 9a5c).